Consider the following 413-residue polypeptide: 1-deoxy-D-xylulose 5-phosphate reductoisomerase (413 aa).

NADPH is bound by residues Thr13, Gly14, Ser15, Ile16, Lys40, Asn41, and Asn127. Lys128 is a 1-deoxy-D-xylulose 5-phosphate binding site. Glu129 provides a ligand contact to NADPH. Mn(2+) is bound at residue Asp153. 4 residues coordinate 1-deoxy-D-xylulose 5-phosphate: Ser154, Glu155, Ser184, and His207. A Mn(2+)-binding site is contributed by Glu155. Gly213 provides a ligand contact to NADPH. 1-deoxy-D-xylulose 5-phosphate is bound by residues Ser220, Asn225, Lys226, and Glu229. Glu229 serves as a coordination point for Mn(2+).

The protein belongs to the DXR family. Mg(2+) is required as a cofactor. It depends on Mn(2+) as a cofactor.

The enzyme catalyses 2-C-methyl-D-erythritol 4-phosphate + NADP(+) = 1-deoxy-D-xylulose 5-phosphate + NADPH + H(+). Its pathway is isoprenoid biosynthesis; isopentenyl diphosphate biosynthesis via DXP pathway; isopentenyl diphosphate from 1-deoxy-D-xylulose 5-phosphate: step 1/6. In terms of biological role, catalyzes the NADPH-dependent rearrangement and reduction of 1-deoxy-D-xylulose-5-phosphate (DXP) to 2-C-methyl-D-erythritol 4-phosphate (MEP). This Nitrosomonas eutropha (strain DSM 101675 / C91 / Nm57) protein is 1-deoxy-D-xylulose 5-phosphate reductoisomerase.